We begin with the raw amino-acid sequence, 252 residues long: Serine/threonine phosphatase stp (252 aa).

Basic and acidic residues predominate over residues 1–18 (MHAEFRTDRGRIRHHNED). Positions 1 to 23 (MHAEFRTDRGRIRHHNEDNGGVF) are disordered. One can recognise a PPM-type phosphatase domain in the interval 2 to 242 (HAEFRTDRGR…DNITVLLVER (241 aa)). 4 residues coordinate Mn(2+): D36, G37, D194, and D233.

It belongs to the PP2C family. Mn(2+) is required as a cofactor.

It localises to the cytoplasm. The protein localises to the membrane. The catalysed reaction is O-phospho-L-seryl-[protein] + H2O = L-seryl-[protein] + phosphate. It carries out the reaction O-phospho-L-threonyl-[protein] + H2O = L-threonyl-[protein] + phosphate. In terms of biological role, protein phosphatase that dephosphorylates EF-Tu. The polypeptide is Serine/threonine phosphatase stp (stp) (Listeria monocytogenes serotype 4b (strain F2365)).